The following is an 806-amino-acid chain: Facilitated trehalose transporter Tret1 (806 aa).

2 disordered regions span residues 1–34 and 48–138; these read MFGNEMDDTRDPLQYGYQRVNTGEGSLSTSTTGT and LNST…HKNQ. Over 1–339 the chain is Cytoplasmic; that stretch reads MFGNEMDDTR…LEVYRPTTNP (339 aa). A compositionally biased stretch (low complexity) spans 25-34; that stretch reads GSLSTSTTGT. A helical transmembrane segment spans residues 340–360; sequence IFIWTQVLAALSVSLGSMVVG. The Extracellular segment spans residues 361-389; sequence FSSAYTSPALVSMKDRNITSFEVTDQSGS. An N-linked (GlcNAc...) asparagine glycan is attached at Asn-377. A helical membrane pass occupies residues 390–410; that stretch reads WVGGIMPLAGLAGGILGGPLI. The Cytoplasmic portion of the chain corresponds to 411 to 424; it reads EYLGRKNTILATAT. The helical transmembrane segment at 425-445 threads the bilayer; it reads PFIISWLLIACATHVAMVLVG. Over 446 to 447 the chain is Extracellular; the sequence is RA. Residues 448–468 traverse the membrane as a helical segment; the sequence is LSGFSVGVASLSLPVYLGETV. The Cytoplasmic portion of the chain corresponds to 469-473; the sequence is QPEVR. The helical transmembrane segment at 474-494 threads the bilayer; sequence GTLGLLPTAFGNIGILLCFVA. Topologically, residues 495–501 are extracellular; the sequence is GKYMDWS. Residues 502 to 522 form a helical membrane-spanning segment; it reads GLAFLGAALPIPFLLLMFLIP. The Cytoplasmic segment spans residues 523–585; it reads ETPRWYVSRG…DLMKKANLKP (63 aa). A helical membrane pass occupies residues 586-606; that stretch reads LLISLGLMFFQQLSGINAVIF. Residues 607 to 622 are Extracellular-facing; the sequence is YTVQIFQDAGSTIDEN. The helical transmembrane segment at 623–643 threads the bilayer; sequence LCTIIVGVVNFIATFIATMLI. Residues 644-649 are Cytoplasmic-facing; that stretch reads DRLGRK. Residues 650 to 670 traverse the membrane as a helical segment; it reads MLLYISDVAMIITLMTLGGFF. Residues 671–681 are Extracellular-facing; it reads YVKNSGQDVSQ. Residues 682 to 702 traverse the membrane as a helical segment; that stretch reads VGWLPLAAFVIYVLGFSLGFG. Topologically, residues 703–723 are cytoplasmic; it reads PIPWLMMGEILPGKIRGSAAS. Residues 724–744 form a helical membrane-spanning segment; the sequence is VATAFNWSCTFIVTKTFADII. At 745–750 the chain is on the extracellular side; sequence NAIGTH. A helical transmembrane segment spans residues 751-771; sequence GTFWMFGSICVIGLAFVIFYV. Residues 772–806 are Cytoplasmic-facing; the sequence is PETQGKSLEDIERKMMGRVRRMSSVANIKPLSFNM.

This sequence belongs to the major facilitator superfamily. Sugar transporter (TC 2.A.1.1) family. Trehalose transporter subfamily.

Its subcellular location is the cell membrane. Functionally, high-capacity facilitative transporter for trehalose. Does not transport maltose, sucrose or lactose. Mediates the bidirectional transfer of trehalose. Responsible for the transport of trehalose synthesized in the fat body and the incorporation of trehalose into other tissues that require a carbon source, thereby regulating trehalose levels in the hemolymph. This Aedes aegypti (Yellowfever mosquito) protein is Facilitated trehalose transporter Tret1.